The sequence spans 220 residues: Cytidylate kinase (220 aa).

An ATP-binding site is contributed by 10 to 18; that stretch reads GPAGAGKST.

Belongs to the cytidylate kinase family. Type 1 subfamily.

The protein resides in the cytoplasm. It catalyses the reaction CMP + ATP = CDP + ADP. The catalysed reaction is dCMP + ATP = dCDP + ADP. The polypeptide is Cytidylate kinase (Alkaliphilus metalliredigens (strain QYMF)).